An 847-amino-acid polypeptide reads, in one-letter code: Alpha-glucuronidase (847 aa).

Positions 1–19 (MVIRSLLLLLLAAIVPVFA) are cleaved as a signal peptide. 8 N-linked (GlcNAc...) asparagine glycosylation sites follow: Asn52, Asn238, Asn321, Asn353, Asn586, Asn692, Asn740, and Asn767.

The protein belongs to the glycosyl hydrolase 67 family.

Its subcellular location is the secreted. The enzyme catalyses an alpha-D-glucuronoside + H2O = D-glucuronate + an alcohol. In terms of biological role, releases 4-O-methylglucuronic acid from xylan. This chain is Alpha-glucuronidase, found in Hypocrea jecorina (Trichoderma reesei).